Here is an 88-residue protein sequence, read N- to C-terminus: Small ribosomal subunit protein bS20 (88 aa).

The tract at residues 1–21 (MANTTSAKKATRKIARRTAVN) is disordered.

The protein belongs to the bacterial ribosomal protein bS20 family.

Functionally, binds directly to 16S ribosomal RNA. The polypeptide is Small ribosomal subunit protein bS20 (Sinorhizobium fredii (strain NBRC 101917 / NGR234)).